A 114-amino-acid chain; its full sequence is UPF0102 protein jhp_0762 (114 aa).

It belongs to the UPF0102 family.

This is UPF0102 protein jhp_0762 from Helicobacter pylori (strain J99 / ATCC 700824) (Campylobacter pylori J99).